The primary structure comprises 200 residues: Histone chaperone asf1a-B (200 aa).

Belongs to the ASF1 family. Interacts with histone H3 (including both histone H3.1 and H3.3) and histone H4.

It localises to the nucleus. In terms of biological role, histone chaperone that facilitates histone deposition and histone exchange and removal during nucleosome assembly and disassembly. This chain is Histone chaperone asf1a-B (asf1ab), found in Xenopus laevis (African clawed frog).